We begin with the raw amino-acid sequence, 185 residues long: Large ribosomal subunit protein uL5 (185 aa).

It belongs to the universal ribosomal protein uL5 family. As to quaternary structure, part of the 50S ribosomal subunit; part of the 5S rRNA/L5/L18/L25 subcomplex. Contacts the 5S rRNA and the P site tRNA. Forms a bridge to the 30S subunit in the 70S ribosome.

Its function is as follows. This is one of the proteins that bind and probably mediate the attachment of the 5S RNA into the large ribosomal subunit, where it forms part of the central protuberance. In the 70S ribosome it contacts protein S13 of the 30S subunit (bridge B1b), connecting the 2 subunits; this bridge is implicated in subunit movement. Contacts the P site tRNA; the 5S rRNA and some of its associated proteins might help stabilize positioning of ribosome-bound tRNAs. This is Large ribosomal subunit protein uL5 from Parvibaculum lavamentivorans (strain DS-1 / DSM 13023 / NCIMB 13966).